Consider the following 215-residue polypeptide: uncharacterized protein (215 aa).

An N-terminal signal peptide occupies residues 1–17 (MKKVLASATILSLMLVG). The segment at 17–110 (GCSNGGNDES…NKQQQSVQDN (94 aa)) is disordered. A lipid anchor (N-palmitoyl cysteine) is attached at Cys18. Cys18 carries the S-diacylglycerol cysteine lipid modification. Over residues 25-62 (ESSHKDDSSKTEQKDKSSSQHDSKKDSKRNDTNNKQDN) the composition is skewed to basic and acidic residues. Composition is skewed to low complexity over residues 63–76 (QENNTNKEQTNNQN) and 91–110 (NSNGNSSDNQNKQQQSVQDN).

The protein localises to the cell membrane. This is an uncharacterized protein from Staphylococcus epidermidis (strain ATCC 35984 / DSM 28319 / BCRC 17069 / CCUG 31568 / BM 3577 / RP62A).